The primary structure comprises 163 residues: Peptidyl-prolyl cis-trans isomerase (163 aa).

In terms of domain architecture, PPIase cyclophilin-type spans 17 to 163; it reads KTAYATIKTN…IESVVFSSSL (147 aa).

Belongs to the cyclophilin-type PPIase family.

The catalysed reaction is [protein]-peptidylproline (omega=180) = [protein]-peptidylproline (omega=0). Functionally, PPIases accelerate the folding of proteins. It catalyzes the cis-trans isomerization of proline imidic peptide bonds in oligopeptides. The chain is Peptidyl-prolyl cis-trans isomerase (ppiA) from Helicobacter pylori (strain ATCC 700392 / 26695) (Campylobacter pylori).